Consider the following 354-residue polypeptide: MTEYRNFLLLFITSLSVIYPCTGISWLGLTINGSSVGWNQTHHCKLLDGLVPDQQQLCKRNLELMHSIVRAARLTKSACTSSFSDMRWNWSSIESAPHFTPDLAKGTREAAFVVSLAAAVVSHAIARACASGDLPSCSCAAMPSEQAAPDFRWGGCGDNLRYYGLQMGSAFSDAPMRNRRSGPQDFRLMQLHNNAVGRQVLMDSLEMKCKCHGVSGSCSVKTCWKGLQDISTISADLKSKYLSATKVIPRQIGTRRQLVPREMEVRPVGENELVYLVSSPDYCTQNAKQGSLGTTDRQCNKTASGSESCGLMCCGRGYNAYTEVLVERCQCKYHWCCYVSCKTCKRTVERYVSK.

The N-terminal stretch at 1–23 (MTEYRNFLLLFITSLSVIYPCTG) is a signal peptide. 3 N-linked (GlcNAc...) asparagine glycosylation sites follow: asparagine 32, asparagine 39, and asparagine 89. 9 disulfides stabilise this stretch: cysteine 129–cysteine 137, cysteine 139–cysteine 156, cysteine 209–cysteine 223, cysteine 211–cysteine 218, cysteine 283–cysteine 314, cysteine 299–cysteine 309, cysteine 329–cysteine 344, cysteine 331–cysteine 341, and cysteine 336–cysteine 337. Serine 215 carries O-palmitoleoyl serine; by PORCN lipidation. Asparagine 300 is a glycosylation site (N-linked (GlcNAc...) asparagine).

Belongs to the Wnt family. Palmitoleoylation is required for efficient binding to frizzled receptors. Depalmitoleoylation leads to Wnt signaling pathway inhibition.

The protein localises to the secreted. It localises to the extracellular space. Its subcellular location is the extracellular matrix. In terms of biological role, ligand for fzd5, a member of the G-protein coupled frizzled receptor family. Plays a role in early eye development, possibly through wnt non-canonical signaling. Promotes eye formation, at least partially, by antagonizing the Wnt/beta-catenin pathway. In addition, promotes coherence of eye field cells, potentially contributing to the coordinated morphogenetic behaviors of cells in the nascent eye field. The sequence is that of Protein Wnt-11 (wnt11) from Danio rerio (Zebrafish).